The primary structure comprises 413 residues: L-cysteine:1D-myo-inositol 2-amino-2-deoxy-alpha-D-glucopyranoside ligase (413 aa).

Zn(2+) is bound at residue Cys15. Residues 15–18 (CGIT), Thr30, and 53–55 (NVT) contribute to the L-cysteinyl-5'-AMP site. Residues 17–27 (ITPYDATHLGH) carry the 'HIGH' region motif. The short motif at 155-160 (ERGGDP) is the 'ERGGDP' region element. Trp195 lines the L-cysteinyl-5'-AMP pocket. Residue Cys199 coordinates Zn(2+). Position 217 to 219 (217 to 219 (GTD)) interacts with L-cysteinyl-5'-AMP. A Zn(2+)-binding site is contributed by His224. Position 251 (Val251) interacts with L-cysteinyl-5'-AMP. The short motif at 257–261 (KMSKS) is the 'KMSKS' region element.

It belongs to the class-I aminoacyl-tRNA synthetase family. MshC subfamily. As to quaternary structure, monomer. Requires Zn(2+) as cofactor.

The catalysed reaction is 1D-myo-inositol 2-amino-2-deoxy-alpha-D-glucopyranoside + L-cysteine + ATP = 1D-myo-inositol 2-(L-cysteinylamino)-2-deoxy-alpha-D-glucopyranoside + AMP + diphosphate + H(+). Its function is as follows. Catalyzes the ATP-dependent condensation of GlcN-Ins and L-cysteine to form L-Cys-GlcN-Ins. The protein is L-cysteine:1D-myo-inositol 2-amino-2-deoxy-alpha-D-glucopyranoside ligase of Frankia alni (strain DSM 45986 / CECT 9034 / ACN14a).